A 613-amino-acid polypeptide reads, in one-letter code: AP-5 complex subunit mu (613 aa).

The MHD domain occupies 309 to 563; it reads KQRLLFTIHE…DYAKVSFKIV (255 aa). Residues 501-522 form a disordered region; sequence SPLQSRRKGDGDDEESEDESAE. The span at 511–521 shows a compositional bias: acidic residues; it reads GDDEESEDESA.

It belongs to the adaptor complexes medium subunit family. Probably part of the adaptor protein complex 5 (AP-5).

Its subcellular location is the cytoplasmic vesicle membrane. The protein is AP-5 complex subunit mu (AP5M) of Arabidopsis thaliana (Mouse-ear cress).